A 129-amino-acid chain; its full sequence is uncharacterized protein (129 aa).

The helical transmembrane segment at 5–25 (IIGLTLAFFVLFLTAVAILFT) threads the bilayer.

The protein resides in the membrane. This is an uncharacterized protein from Mycoplasma pneumoniae (strain ATCC 29342 / M129 / Subtype 1) (Mycoplasmoides pneumoniae).